We begin with the raw amino-acid sequence, 157 residues long: Phosphopantetheine adenylyltransferase (157 aa).

Serine 8 lines the substrate pocket. Residues 8-9 (SF) and histidine 16 each bind ATP. Positions 40, 72, and 86 each coordinate substrate. Residues 87-89 (GLR), glutamate 97, and 121-127 (FGTISSS) contribute to the ATP site.

This sequence belongs to the bacterial CoaD family. In terms of assembly, homohexamer. Requires Mg(2+) as cofactor.

It localises to the cytoplasm. It catalyses the reaction (R)-4'-phosphopantetheine + ATP + H(+) = 3'-dephospho-CoA + diphosphate. It functions in the pathway cofactor biosynthesis; coenzyme A biosynthesis; CoA from (R)-pantothenate: step 4/5. Reversibly transfers an adenylyl group from ATP to 4'-phosphopantetheine, yielding dephospho-CoA (dPCoA) and pyrophosphate. The sequence is that of Phosphopantetheine adenylyltransferase from Cutibacterium acnes (strain DSM 16379 / KPA171202) (Propionibacterium acnes).